The chain runs to 213 residues: Small ribosomal subunit protein uS3 (213 aa).

Positions 38–106 (IRKYVKKTLY…EFSIEVNEIR (69 aa)) constitute a KH type-2 domain.

Belongs to the universal ribosomal protein uS3 family. In terms of assembly, part of the 30S ribosomal subunit. Forms a tight complex with proteins S10 and S14.

Functionally, binds the lower part of the 30S subunit head. Binds mRNA in the 70S ribosome, positioning it for translation. The polypeptide is Small ribosomal subunit protein uS3 (Oleidesulfovibrio alaskensis (strain ATCC BAA-1058 / DSM 17464 / G20) (Desulfovibrio alaskensis)).